The following is a 52-amino-acid chain: UPF0057 membrane protein PA0567 (52 aa).

The next 2 helical transmembrane spans lie at 6 to 26 and 29 to 49; these read ILIA…FGGA and LNIL…VYII.

Belongs to the UPF0057 (PMP3) family.

The protein resides in the cell membrane. In Pseudomonas aeruginosa (strain ATCC 15692 / DSM 22644 / CIP 104116 / JCM 14847 / LMG 12228 / 1C / PRS 101 / PAO1), this protein is UPF0057 membrane protein PA0567.